The sequence spans 434 residues: UDP-N-acetylglucosamine 1-carboxyvinyltransferase (434 aa).

Residue 22–23 (KN) participates in phosphoenolpyruvate binding. Arg97 is a binding site for UDP-N-acetyl-alpha-D-glucosamine. Asp121 acts as the Proton donor in catalysis. 2 residues coordinate UDP-N-acetyl-alpha-D-glucosamine: Asp319 and Met341.

Belongs to the EPSP synthase family. MurA subfamily.

Its subcellular location is the cytoplasm. It catalyses the reaction phosphoenolpyruvate + UDP-N-acetyl-alpha-D-glucosamine = UDP-N-acetyl-3-O-(1-carboxyvinyl)-alpha-D-glucosamine + phosphate. Its pathway is cell wall biogenesis; peptidoglycan biosynthesis. Cell wall formation. Adds enolpyruvyl to UDP-N-acetylglucosamine. This Porphyromonas gingivalis (strain ATCC BAA-308 / W83) protein is UDP-N-acetylglucosamine 1-carboxyvinyltransferase.